The chain runs to 393 residues: NAD(P)H-quinone oxidoreductase subunit H, chloroplastic (393 aa).

It belongs to the complex I 49 kDa subunit family. As to quaternary structure, NDH is composed of at least 16 different subunits, 5 of which are encoded in the nucleus.

It localises to the plastid. The protein resides in the chloroplast thylakoid membrane. The catalysed reaction is a plastoquinone + NADH + (n+1) H(+)(in) = a plastoquinol + NAD(+) + n H(+)(out). The enzyme catalyses a plastoquinone + NADPH + (n+1) H(+)(in) = a plastoquinol + NADP(+) + n H(+)(out). In terms of biological role, NDH shuttles electrons from NAD(P)H:plastoquinone, via FMN and iron-sulfur (Fe-S) centers, to quinones in the photosynthetic chain and possibly in a chloroplast respiratory chain. The immediate electron acceptor for the enzyme in this species is believed to be plastoquinone. Couples the redox reaction to proton translocation, and thus conserves the redox energy in a proton gradient. In Manihot esculenta (Cassava), this protein is NAD(P)H-quinone oxidoreductase subunit H, chloroplastic.